The sequence spans 150 residues: MKVLAQNRRARHDYQILETYEAGIVLSGDEVKSAKEGNVQLRDAFVRVENGEAWLYNMHIAPYEKTGEPFRGDSKRKRKLLLHKREINKILGYLTQKGLTAIPLSMYVNDRGFIKVSIGVAKGKKMVDKRQTIKERDIERELRREGKIRY.

This sequence belongs to the SmpB family.

The protein resides in the cytoplasm. Required for rescue of stalled ribosomes mediated by trans-translation. Binds to transfer-messenger RNA (tmRNA), required for stable association of tmRNA with ribosomes. tmRNA and SmpB together mimic tRNA shape, replacing the anticodon stem-loop with SmpB. tmRNA is encoded by the ssrA gene; the 2 termini fold to resemble tRNA(Ala) and it encodes a 'tag peptide', a short internal open reading frame. During trans-translation Ala-aminoacylated tmRNA acts like a tRNA, entering the A-site of stalled ribosomes, displacing the stalled mRNA. The ribosome then switches to translate the ORF on the tmRNA; the nascent peptide is terminated with the 'tag peptide' encoded by the tmRNA and targeted for degradation. The ribosome is freed to recommence translation, which seems to be the essential function of trans-translation. This is SsrA-binding protein from Coprothermobacter proteolyticus (strain ATCC 35245 / DSM 5265 / OCM 4 / BT).